The sequence spans 282 residues: HMG box-containing protein R545 (282 aa).

The disordered stretch occupies residues 1–282 (MPKKTATKAN…KKEASDEESD (282 aa)). A compositionally biased stretch (acidic residues) spans 16–29 (DSENDSVVSEEEDN). Over residues 70–87 (KGKVNAKKAPAKKAPVKK) the composition is skewed to basic residues. Residues 93-121 (DSDNEEDEASEDGSDDEEDVVSADDSDSD) show a composition bias toward acidic residues. Residues 127-153 (KAAKKAPAKKAPAKKAPAKKAPAKKGK) are compositionally biased toward basic residues. 2 stretches are compositionally biased toward basic and acidic residues: residues 176-187 (TKKDGDKPKKPL) and 197-214 (RMPE…KEYM). The segment at residues 183 to 252 (PKKPLSDYQK…KAPAKGGSKS (70 aa)) is a DNA-binding region (HMG box). Over residues 253–273 (TAKKAPAKKAPAKKAPAKKSK) the composition is skewed to basic residues.

The protein is HMG box-containing protein R545 of Acanthamoeba polyphaga mimivirus (APMV).